Here is a 249-residue protein sequence, read N- to C-terminus: 5'-nucleotidase SurE (249 aa).

Residues aspartate 9, aspartate 10, serine 40, and asparagine 92 each contribute to the a divalent metal cation site.

Belongs to the SurE nucleotidase family. A divalent metal cation serves as cofactor.

It localises to the cytoplasm. It carries out the reaction a ribonucleoside 5'-phosphate + H2O = a ribonucleoside + phosphate. Functionally, nucleotidase that shows phosphatase activity on nucleoside 5'-monophosphates. The chain is 5'-nucleotidase SurE from Shewanella oneidensis (strain ATCC 700550 / JCM 31522 / CIP 106686 / LMG 19005 / NCIMB 14063 / MR-1).